The sequence spans 402 residues: Pentalenic acid synthase (402 aa).

The tract at residues 1-28 is disordered; sequence MTEPGTSVSAPVAFPQDRTCPYDPPTAY. A heme-binding site is contributed by Cys351.

This sequence belongs to the cytochrome P450 family. Heme serves as cofactor.

It carries out the reaction 1-deoxypentalenate + reduced 2[4Fe-4S]-[ferredoxin] + O2 + 2 H(+) = pentalenate + oxidized 2[4Fe-4S]-[ferredoxin] + H2O. It functions in the pathway antibiotic biosynthesis; neopentalenolactone biosynthesis. Its function is as follows. Catalyzes the conversion of 1-deoxypentalenic acid to pentalenic acid in the biosynthesis of neopentalenolactone antibiotic. The chain is Pentalenic acid synthase (cyp28) from Streptomyces avermitilis (strain ATCC 31267 / DSM 46492 / JCM 5070 / NBRC 14893 / NCIMB 12804 / NRRL 8165 / MA-4680).